The primary structure comprises 256 residues: Ribonuclease 3 (256 aa).

Positions 3–125 (LDALQQRLGY…IVGAVFLDAG (123 aa)) constitute an RNase III domain. Residue E38 coordinates Mg(2+). Residue D42 is part of the active site. Residues D111 and E114 each coordinate Mg(2+). Residue E114 is part of the active site. In terms of domain architecture, DRBM spans 152–222 (DAKTLLQEYL…AKLALDEVQK (71 aa)). A disordered region spans residues 229-256 (KRSRAERTGKTRKQPQPQDPQLSLRLKE).

Belongs to the ribonuclease III family. In terms of assembly, homodimer. Mg(2+) serves as cofactor.

Its subcellular location is the cytoplasm. The enzyme catalyses Endonucleolytic cleavage to 5'-phosphomonoester.. Functionally, digests double-stranded RNA. Involved in the processing of primary rRNA transcript to yield the immediate precursors to the large and small rRNAs (23S and 16S). Processes some mRNAs, and tRNAs when they are encoded in the rRNA operon. Processes pre-crRNA and tracrRNA of type II CRISPR loci if present in the organism. The chain is Ribonuclease 3 from Cupriavidus taiwanensis (strain DSM 17343 / BCRC 17206 / CCUG 44338 / CIP 107171 / LMG 19424 / R1) (Ralstonia taiwanensis (strain LMG 19424)).